A 146-amino-acid chain; its full sequence is Endoribonuclease YbeY (146 aa).

Zn(2+)-binding residues include His-108, His-112, and His-118.

It belongs to the endoribonuclease YbeY family. The cofactor is Zn(2+).

Its subcellular location is the cytoplasm. In terms of biological role, single strand-specific metallo-endoribonuclease involved in late-stage 70S ribosome quality control and in maturation of the 3' terminus of the 16S rRNA. This chain is Endoribonuclease YbeY, found in Aster yellows witches'-broom phytoplasma (strain AYWB).